The following is a 1105-amino-acid chain: ATP-dependent DNA helicase MPH1 (1105 aa).

The 168-residue stretch at 94–261 (IVQRAFYDNL…EIIDNLSISK (168 aa)) folds into the Helicase ATP-binding domain. Position 107-114 (107-114 (LPTGLGKT)) interacts with ATP. The DEAH box signature appears at 209–212 (DEAH). The 174-residue stretch at 468-641 (SIERIGSNLR…LITLAQSNRI (174 aa)) folds into the Helicase C-terminal domain. Disordered regions lie at residues 493 to 534 (EEAY…AQIK), 684 to 708 (KGKK…EKRF), 758 to 824 (IQSK…PKLG), 850 to 880 (LVTG…ECAP), and 918 to 953 (VSDD…FDEG). Over residues 499–511 (KGKKGRTKGKATK) the composition is skewed to basic residues. The segment covering 518–532 (TPERSTSRTSSEDAQ) has biased composition (basic and acidic residues). Positions 684–705 (KGKKVTKSKSKSKSNSKSKKIE) are enriched in basic residues. The segment covering 764–787 (PVKENQSKRPNSEHICEEDSRQET) has biased composition (basic and acidic residues). Low complexity predominate over residues 788 to 799 (ENNSNESNGSFE). The span at 927 to 943 (DSINNQQLHKNKNLGST) shows a compositional bias: polar residues. Residues 944–953 (SDDDDAFDEG) show a composition bias toward acidic residues.

This sequence belongs to the DEAD box helicase family. DEAH subfamily. FANCM sub-subfamily. In terms of assembly, interacts with the MHF histone-fold complex to form the FANCM-MHF complex.

The protein localises to the nucleus. It carries out the reaction ATP + H2O = ADP + phosphate + H(+). ATP-dependent DNA helicase involved in DNA damage repair by homologous recombination and in genome maintenance. Capable of unwinding D-loops. Plays a role in limiting crossover recombinants during mitotic DNA double-strand break (DSB) repair. Component of a FANCM-MHF complex which promotes gene conversion at blocked replication forks, probably by reversal of the stalled fork. The chain is ATP-dependent DNA helicase MPH1 from Debaryomyces hansenii (strain ATCC 36239 / CBS 767 / BCRC 21394 / JCM 1990 / NBRC 0083 / IGC 2968) (Yeast).